The following is a 67-amino-acid chain: Large ribosomal subunit protein uL29 (67 aa).

It belongs to the universal ribosomal protein uL29 family.

The chain is Large ribosomal subunit protein uL29 from Polaromonas naphthalenivorans (strain CJ2).